Reading from the N-terminus, the 83-residue chain is Large ribosomal subunit protein uL23 (83 aa).

It belongs to the universal ribosomal protein uL23 family. Part of the 50S ribosomal subunit. Contacts protein L29.

Its function is as follows. Binds to 23S rRNA. One of the proteins that surrounds the polypeptide exit tunnel on the outside of the ribosome. The polypeptide is Large ribosomal subunit protein uL23 (Archaeoglobus fulgidus (strain ATCC 49558 / DSM 4304 / JCM 9628 / NBRC 100126 / VC-16)).